The sequence spans 27 residues: GFGSLFKFLGKKLLKTVAKQAAKKQME.

Glu-27 is subject to Glutamic acid 1-amide.

As to expression, expressed by the venom gland.

The protein resides in the secreted. The protein is Cupiennin-3a of Cupiennius salei (American wandering spider).